Consider the following 146-residue polypeptide: Aminoglycoside N(6')-acetyltransferase type 1 (146 aa).

In terms of domain architecture, N-acetyltransferase spans 1–146 (MNIMPISESQ…RVVYFKKNIG (146 aa)). Substrate-binding residues include Trp22, His25, Tyr66, and Glu79. Residue 81–83 (IFV) coordinates acetyl-CoA. Substrate is bound at residue Asp115. Asn120 contacts acetyl-CoA. Glu136 is a substrate binding site.

Homodimer.

It carries out the reaction kanamycin B + acetyl-CoA = N(6')-acetylkanamycin B + CoA + H(+). Catalyzes the transfer of an acetyl group from acetyl-CoA to the 6'-amino group of aminoglycoside molecules conferring resistance to antibiotics containing the purpurosamine ring including amikacin, kanamycin, tobramycin and netilmicin. The chain is Aminoglycoside N(6')-acetyltransferase type 1 from Acinetobacter baumannii.